The chain runs to 697 residues: Elongation factor G (697 aa).

In terms of domain architecture, tr-type G spans 10–285 (AKTRNIGIMA…GVIDYLPSPL (276 aa)). GTP-binding positions include 19–26 (AHIDAGKT), 83–87 (DTPGH), and 137–140 (NKMD).

The protein belongs to the TRAFAC class translation factor GTPase superfamily. Classic translation factor GTPase family. EF-G/EF-2 subfamily.

It is found in the cytoplasm. Catalyzes the GTP-dependent ribosomal translocation step during translation elongation. During this step, the ribosome changes from the pre-translocational (PRE) to the post-translocational (POST) state as the newly formed A-site-bound peptidyl-tRNA and P-site-bound deacylated tRNA move to the P and E sites, respectively. Catalyzes the coordinated movement of the two tRNA molecules, the mRNA and conformational changes in the ribosome. This is Elongation factor G from Lactobacillus helveticus (strain DPC 4571).